Consider the following 160-residue polypeptide: Cytochrome b6-f complex subunit 4 (160 aa).

Transmembrane regions (helical) follow at residues 36-56 (LLYIFPVVILGTIACNVGLAV), 95-115 (LLGVLLMASVPAGLLTVPFLE), and 131-151 (TVFLVGTVVALWLGIGATLPI).

The protein belongs to the cytochrome b family. PetD subfamily. As to quaternary structure, the 4 large subunits of the cytochrome b6-f complex are cytochrome b6, subunit IV (17 kDa polypeptide, petD), cytochrome f and the Rieske protein, while the 4 small subunits are petG, petL, petM and petN. The complex functions as a dimer.

The protein localises to the plastid. Its subcellular location is the chloroplast thylakoid membrane. In terms of biological role, component of the cytochrome b6-f complex, which mediates electron transfer between photosystem II (PSII) and photosystem I (PSI), cyclic electron flow around PSI, and state transitions. This chain is Cytochrome b6-f complex subunit 4, found in Spinacia oleracea (Spinach).